Here is a 287-residue protein sequence, read N- to C-terminus: Isopentenyl-diphosphate Delta-isomerase 1, chloroplastic (287 aa).

Residues 1 to 51 constitute a chloroplast transit peptide; sequence MTLLLNTTAKLYIAPRTLPFTSSSTFARSPFLRIPSLLKPLSPLTARVSLS. Position 90 (Lys-90) interacts with substrate. 2 residues coordinate Mg(2+): His-94 and His-106. Positions 104-256 constitute a Nudix hydrolase domain; sequence LLHRAFSVFL…GLKLSPWFRL (153 aa). Residues Arg-125 and Lys-129 each coordinate substrate. Residue Cys-141 is part of the active site. Substrate is bound at residue Ser-142. The Nudix box motif lies at 142 to 172; the sequence is SHPLYRESELIDEESLGARNAAQRKLLDELG. The Mg(2+) site is built by Glu-201 and Glu-203. Residue Glu-203 is part of the active site.

It belongs to the IPP isomerase type 1 family. Monomer. It depends on Mg(2+) as a cofactor. As to expression, mainly expressed in roots and trichomes and, to a lower extent, in leaves, flowers and stems.

It localises to the plastid. The protein resides in the chloroplast. It carries out the reaction isopentenyl diphosphate = dimethylallyl diphosphate. Its pathway is isoprenoid biosynthesis; dimethylallyl diphosphate biosynthesis; dimethylallyl diphosphate from isopentenyl diphosphate: step 1/1. It functions in the pathway porphyrin-containing compound metabolism; chlorophyll biosynthesis. Functionally, catalyzes the 1,3-allylic rearrangement of the homoallylic substrate isopentenyl (IPP) to its highly electrophilic allylic isomer, dimethylallyl diphosphate (DMAPP). In Cannabis sativa (Hemp), this protein is Isopentenyl-diphosphate Delta-isomerase 1, chloroplastic.